Reading from the N-terminus, the 747-residue chain is Homeobox-leucine zipper protein GLABRA 2 (747 aa).

The disordered stretch occupies residues 31 to 112 (RNASSGSTNP…KKYHRHTTDQ (82 aa)). The segment covering 58-68 (EMSSENSGPTR) has biased composition (polar residues). Acidic residues predominate over residues 73–90 (EDLEGEDHDDEEEEEEDG). Positions 97–107 (TNKRKRKKYHR) are enriched in basic residues. A DNA-binding region (homeobox) is located at residues 101–160 (KRKKYHRHTTDQIRHMEALFKETPHPDEKQRQQLSKQLGLAPRQVKFWFQNRRTQIKAIQ). Positions 155-223 (QIKAIQERHE…LDKLRAALGR (69 aa)) form a coiled coil. In terms of domain architecture, START spans 250-489 (FALEKSRIAE…LQLHCERLVF (240 aa)).

Belongs to the HD-ZIP homeobox family. Class IV subfamily. In terms of assembly, interacts with GIR1 and GIR2. Expressed in individual developing trichome cells of the emerging leaf primordia. Expressed in differentiating hairless cells of root epidermis.

It is found in the nucleus. In terms of biological role, transcription factor involved in the determination of epidermal cell identity. Required for correct morphological development and maturation of trichomes. Regulates the frequency of trichome initiation and determines trichome spacing. Acts as a negative factor for root hair development. Required for ectopic repression of root hair development in a subset of epidermal cells. May suppress hair formation in root epidermis by promoting differentiation into hairless epidermal cells. Directly suppresses the bHLH transcription factor genes, RHD6, RSL1, RSL2, LRL1, and LRL2, which have diverse functions in root hair development. Required for normal development of seed coat mucilage. Involved in the control of seed oil accumulation. Acts as a negative regulator of anthocyanin biosynthesis. May directly repress the expression of some component genes from the MYB-bHLH-WD40 (MBW) transcriptional activator complex. The MBW complex activates the transcription of late biosynthesis genes in the flavonoid pathway, leading to the production of anthocyanins. The protein is Homeobox-leucine zipper protein GLABRA 2 of Arabidopsis thaliana (Mouse-ear cress).